Here is a 200-residue protein sequence, read N- to C-terminus: Membrane-spanning 4-domains subfamily A member 5 (200 aa).

At methionine 1–threonine 52 the chain is on the cytoplasmic side. The chain crosses the membrane as a helical span at residues isoleucine 53–leucine 73. Over lysine 74–proline 80 the chain is Extracellular. Residues phenylalanine 81–phenylalanine 101 traverse the membrane as a helical segment. Over leucine 102 to methionine 120 the chain is Cytoplasmic. The helical transmembrane segment at asparagine 121 to leucine 141 threads the bilayer. Residues aspartate 142–valine 159 are Extracellular-facing. Residues threonine 160–isoleucine 180 form a helical membrane-spanning segment. Over serine 181–cysteine 200 the chain is Cytoplasmic.

The protein belongs to the MS4A family. In terms of tissue distribution, expressed at high level in the testis. Detected also in the pancreas, heart and in the brain.

The protein resides in the membrane. Functionally, may be involved in signal transduction as a component of a multimeric receptor complex. The chain is Membrane-spanning 4-domains subfamily A member 5 (MS4A5) from Homo sapiens (Human).